The chain runs to 229 residues: Large ribosomal subunit protein uL1 (229 aa).

This sequence belongs to the universal ribosomal protein uL1 family. Part of the 50S ribosomal subunit.

Binds directly to 23S rRNA. The L1 stalk is quite mobile in the ribosome, and is involved in E site tRNA release. Functionally, protein L1 is also a translational repressor protein, it controls the translation of the L11 operon by binding to its mRNA. The chain is Large ribosomal subunit protein uL1 from Ureaplasma parvum serovar 3 (strain ATCC 27815 / 27 / NCTC 11736).